We begin with the raw amino-acid sequence, 211 residues long: N-(5'-phosphoribosyl)anthranilate isomerase (211 aa).

This sequence belongs to the TrpF family.

It catalyses the reaction N-(5-phospho-beta-D-ribosyl)anthranilate = 1-(2-carboxyphenylamino)-1-deoxy-D-ribulose 5-phosphate. The protein operates within amino-acid biosynthesis; L-tryptophan biosynthesis; L-tryptophan from chorismate: step 3/5. The polypeptide is N-(5'-phosphoribosyl)anthranilate isomerase (Hyphomonas neptunium (strain ATCC 15444)).